Here is a 348-residue protein sequence, read N- to C-terminus: Protein pelota homolog (348 aa).

The protein belongs to the eukaryotic release factor 1 family. Pelota subfamily. Monomer. The cofactor is a divalent metal cation.

It is found in the cytoplasm. May function in recognizing stalled ribosomes, interact with stem-loop structures in stalled mRNA molecules, and effect endonucleolytic cleavage of the mRNA. May play a role in the release non-functional ribosomes and degradation of damaged mRNAs. Has endoribonuclease activity. This is Protein pelota homolog from Methanococcus maripaludis (strain C6 / ATCC BAA-1332).